The following is a 185-amino-acid chain: Photosystem I assembly protein Ycf4 (185 aa).

2 helical membrane-spanning segments follow: residues 21–43 (NFFW…ISSY) and 68–90 (FYGI…NVGS).

This sequence belongs to the Ycf4 family.

Its subcellular location is the plastid. It is found in the chloroplast thylakoid membrane. In terms of biological role, seems to be required for the assembly of the photosystem I complex. This is Photosystem I assembly protein Ycf4 from Aegilops tauschii (Tausch's goatgrass).